Here is a 477-residue protein sequence, read N- to C-terminus: Cysteine--tRNA ligase (477 aa).

C29 provides a ligand contact to Zn(2+). A 'HIGH' region motif is present at residues 31 to 41; sequence PTVQASPHIGH. C219, H244, and E248 together coordinate Zn(2+). Residues 275–279 carry the 'KMSKS' region motif; sequence KMSKS. K278 contributes to the ATP binding site.

Belongs to the class-I aminoacyl-tRNA synthetase family. In terms of assembly, monomer. Zn(2+) serves as cofactor.

It is found in the cytoplasm. It catalyses the reaction tRNA(Cys) + L-cysteine + ATP = L-cysteinyl-tRNA(Cys) + AMP + diphosphate. The polypeptide is Cysteine--tRNA ligase (Leifsonia xyli subsp. xyli (strain CTCB07)).